The chain runs to 89 residues: Small ribosomal subunit protein uS19 (89 aa).

Belongs to the universal ribosomal protein uS19 family.

Functionally, protein S19 forms a complex with S13 that binds strongly to the 16S ribosomal RNA. The polypeptide is Small ribosomal subunit protein uS19 (Stenotrophomonas maltophilia (strain R551-3)).